The primary structure comprises 610 residues: Pyruvate decarboxylase 1 (610 aa).

Substrate-binding residues include aspartate 72 and histidine 159. A thiamine pyrophosphate binding region spans residues aspartate 437–isoleucine 519. Residues aspartate 487, asparagine 514, and glycine 516 each coordinate Mg(2+). Glutamate 520 serves as a coordination point for substrate.

The protein belongs to the TPP enzyme family. In terms of assembly, homotetramer. A metal cation serves as cofactor. It depends on thiamine diphosphate as a cofactor.

The catalysed reaction is a 2-oxocarboxylate + H(+) = an aldehyde + CO2. This Zea mays (Maize) protein is Pyruvate decarboxylase 1 (PDC1).